Consider the following 318-residue polypeptide: Ribosomal RNA small subunit methyltransferase H (318 aa).

S-adenosyl-L-methionine is bound by residues 35 to 37 (GGH), Asp-54, Phe-83, Asp-104, and Gln-111.

Belongs to the methyltransferase superfamily. RsmH family.

Its subcellular location is the cytoplasm. It carries out the reaction cytidine(1402) in 16S rRNA + S-adenosyl-L-methionine = N(4)-methylcytidine(1402) in 16S rRNA + S-adenosyl-L-homocysteine + H(+). Functionally, specifically methylates the N4 position of cytidine in position 1402 (C1402) of 16S rRNA. The chain is Ribosomal RNA small subunit methyltransferase H from Latilactobacillus sakei subsp. sakei (strain 23K) (Lactobacillus sakei subsp. sakei).